The primary structure comprises 85 residues: MEERNLRKTRTGKVISNKMDKTIVVAVQDNVKHPLYNKIVKRTYKLKAHDENNECLIGDVVKVMETRPLSKDKRWRLVEIISRAK.

It belongs to the universal ribosomal protein uS17 family. As to quaternary structure, part of the 30S ribosomal subunit.

One of the primary rRNA binding proteins, it binds specifically to the 5'-end of 16S ribosomal RNA. In Lachnospira eligens (strain ATCC 27750 / DSM 3376 / VPI C15-48 / C15-B4) (Eubacterium eligens), this protein is Small ribosomal subunit protein uS17.